Reading from the N-terminus, the 243-residue chain is 23S rRNA (guanosine-2'-O-)-methyltransferase RlmB (243 aa).

The S-adenosyl-L-methionine site is built by Gly196, Ile216, and Leu225.

The protein belongs to the class IV-like SAM-binding methyltransferase superfamily. RNA methyltransferase TrmH family. RlmB subfamily. In terms of assembly, homodimer.

It is found in the cytoplasm. The catalysed reaction is guanosine(2251) in 23S rRNA + S-adenosyl-L-methionine = 2'-O-methylguanosine(2251) in 23S rRNA + S-adenosyl-L-homocysteine + H(+). In terms of biological role, specifically methylates the ribose of guanosine 2251 in 23S rRNA. This Shigella flexneri protein is 23S rRNA (guanosine-2'-O-)-methyltransferase RlmB.